A 637-amino-acid polypeptide reads, in one-letter code: Transcription factor PHYTOCHROME INTERACTING FACTOR-LIKE 15 (637 aa).

Residues 35–46 (FFGGTGGGGGGS) are compositionally biased toward gly residues. Disordered stretches follow at residues 35 to 54 (FFGG…QERQ), 146 to 213 (ASLP…EGVM), and 356 to 397 (ECSA…RRRR). Over residues 149 to 170 (PASNHNGATNNRNAPVATTTTR) the composition is skewed to polar residues. The segment at 384-397 (RTAEVHNLSERRRR) is basic motif. The span at 384–397 (RTAEVHNLSERRRR) shows a compositional bias: basic and acidic residues. One can recognise a bHLH domain in the interval 384 to 433 (RTAEVHNLSERRRRDRINEKMRALQELIPNCNKIDKASMLDEAIEYLKTL). The segment at 398-433 (DRINEKMRALQELIPNCNKIDKASMLDEAIEYLKTL) is helix-loop-helix motif. Positions 601-637 (GDNENFRIPSSAQTKSSQFSDGTGKGTNARERDGAET) are disordered. Residues 608-621 (IPSSAQTKSSQFSD) are compositionally biased toward polar residues. Positions 628–637 (NARERDGAET) are enriched in basic and acidic residues.

It belongs to the bHLH protein family. Interacts with LF and PRR1.

Its subcellular location is the nucleus. In terms of biological role, transcription factor that may act as negative regulator of phyB-dependent light signal transduction. In Oryza sativa subsp. japonica (Rice), this protein is Transcription factor PHYTOCHROME INTERACTING FACTOR-LIKE 15.